The primary structure comprises 400 residues: Enoyl-[acyl-carrier-protein] reductase [NADH] 2 (400 aa).

Residues 48-53, 75-76, 112-113, and 141-142 each bind NAD(+); these read GASSGF, FE, DA, and LA. Tyrosine 227 lines the substrate pocket. Catalysis depends on tyrosine 237, which acts as the Proton donor. NAD(+)-binding positions include lysine 246 and 275-277; that span reads LVT.

The protein belongs to the TER reductase family. Monomer.

The enzyme catalyses a 2,3-saturated acyl-[ACP] + NAD(+) = a (2E)-enoyl-[ACP] + NADH + H(+). Its pathway is lipid metabolism; fatty acid biosynthesis. Involved in the final reduction of the elongation cycle of fatty acid synthesis (FAS II). Catalyzes the reduction of a carbon-carbon double bond in an enoyl moiety that is covalently linked to an acyl carrier protein (ACP). The chain is Enoyl-[acyl-carrier-protein] reductase [NADH] 2 from Photobacterium profundum (strain SS9).